Consider the following 335-residue polypeptide: MFVDQITLELRAGKGGNGVVAWRKEKYLPKGGPYGGNGGNGGSILIETVTNMYSFEEYRNLRFLKADDGQAGASNNRTGRNGKDLVLKVPEGTLLRDAATGELIHDFTKDGERIVVCQGGRGGKGNVFFKTSTNRAPTKATPGKPGEIRLVELELKLIADIGLVGFPNAGKSTLFNTLARTEVKVGAYPFTTLHPSLGLVHQEGMLYQKTWIMADIPGIIEGASQNRGLGLDFLRHIERTRLLLFVIDISGIERHSPEQDLKILMGELLAYKEELKDKDMVIALNKIDQLLPDEREERVALLKQQFPDQEFILLSGLTGEGVDALYDLFKSKLSE.

The 158-residue stretch at 1–158 folds into the Obg domain; sequence MFVDQITLEL…RLVELELKLI (158 aa). Residues 159–334 form the OBG-type G domain; that stretch reads ADIGLVGFPN…LYDLFKSKLS (176 aa). GTP is bound by residues 165–172, 190–194, 215–218, 285–288, and 315–317; these read GFPNAGKS, FTTLH, DIPG, NKID, and SGL. Residues serine 172 and threonine 192 each contribute to the Mg(2+) site.

The protein belongs to the TRAFAC class OBG-HflX-like GTPase superfamily. OBG GTPase family. As to quaternary structure, monomer. The cofactor is Mg(2+).

It localises to the cytoplasm. Functionally, an essential GTPase which binds GTP, GDP and possibly (p)ppGpp with moderate affinity, with high nucleotide exchange rates and a fairly low GTP hydrolysis rate. Plays a role in control of the cell cycle, stress response, ribosome biogenesis and in those bacteria that undergo differentiation, in morphogenesis control. This chain is GTPase Obg, found in Chlamydia trachomatis serovar L2 (strain ATCC VR-902B / DSM 19102 / 434/Bu).